Reading from the N-terminus, the 296-residue chain is 4-hydroxy-tetrahydrodipicolinate synthase (296 aa).

Thr-46 lines the pyruvate pocket. Tyr-134 acts as the Proton donor/acceptor in catalysis. Lys-162 (schiff-base intermediate with substrate) is an active-site residue. Ile-204 contacts pyruvate.

It belongs to the DapA family. In terms of assembly, homotetramer; dimer of dimers.

The protein localises to the cytoplasm. The enzyme catalyses L-aspartate 4-semialdehyde + pyruvate = (2S,4S)-4-hydroxy-2,3,4,5-tetrahydrodipicolinate + H2O + H(+). The protein operates within amino-acid biosynthesis; L-lysine biosynthesis via DAP pathway; (S)-tetrahydrodipicolinate from L-aspartate: step 3/4. In terms of biological role, catalyzes the condensation of (S)-aspartate-beta-semialdehyde [(S)-ASA] and pyruvate to 4-hydroxy-tetrahydrodipicolinate (HTPA). This is 4-hydroxy-tetrahydrodipicolinate synthase from Clostridium novyi (strain NT).